The chain runs to 328 residues: Zinc chaperone YeiR (328 aa).

9 to 17 (GFLGSGKTT) contacts GTP. A CXCC motif motif is present at residues 63–66 (CMCC). D155 provides a ligand contact to GTP. Residues 241-321 (CGWIFDADTV…WNALQSALLK (81 aa)) enclose the CobW C-terminal domain.

The protein belongs to the SIMIBI class G3E GTPase family. ZNG1 subfamily. In terms of assembly, oligomerizes in the presence of Zn(2+).

The enzyme catalyses GTP + H2O = GDP + phosphate + H(+). Its activity is regulated as follows. GTPase activity is enhanced by Zn(2+) binding. Zinc chaperone that directly transfers zinc cofactor to target proteins, thereby activating them. Zinc is transferred from the CXCC motif in the GTPase domain to the zinc binding site in target proteins in a process requiring GTP hydrolysis. The chain is Zinc chaperone YeiR (yeiR) from Escherichia coli (strain K12).